The primary structure comprises 416 residues: (S)-ureidoglycine--glyoxylate transaminase (416 aa).

Residue Lys-198 is modified to N6-(pyridoxal phosphate)lysine.

This sequence belongs to the class-V pyridoxal-phosphate-dependent aminotransferase family. As to quaternary structure, homodimer. The cofactor is pyridoxal 5'-phosphate.

The enzyme catalyses (S)-2-ureidoglycine + glyoxylate = N-carbamoyl-2-oxoglycine + glycine. Its pathway is nitrogen metabolism; (S)-allantoin degradation. Its function is as follows. Catalyzes the transamination between an unstable intermediate ((S)-ureidoglycine) and the end product of purine catabolism (glyoxylate) to yield oxalurate and glycine. Glyoxylate is the preferred substrate, but other amino-group acceptors can be used. The sequence is that of (S)-ureidoglycine--glyoxylate transaminase from Bacillus subtilis (strain 168).